The chain runs to 660 residues: DNA mismatch repair protein MutL (660 aa).

Residues S414 to N433 form a disordered region.

The protein belongs to the DNA mismatch repair MutL/HexB family.

This protein is involved in the repair of mismatches in DNA. It is required for dam-dependent methyl-directed DNA mismatch repair. May act as a 'molecular matchmaker', a protein that promotes the formation of a stable complex between two or more DNA-binding proteins in an ATP-dependent manner without itself being part of a final effector complex. The sequence is that of DNA mismatch repair protein MutL from Streptococcus pyogenes serotype M5 (strain Manfredo).